A 178-amino-acid chain; its full sequence is Alkyl hydroperoxide reductase AhpD (178 aa).

Cys-130 serves as the catalytic Proton donor. A disulfide bridge connects residues Cys-130 and Cys-133. Cys-133 acts as the Cysteine sulfenic acid (-SOH) intermediate in catalysis.

This sequence belongs to the AhpD family. In terms of assembly, homotrimer.

It carries out the reaction N(6)-[(R)-dihydrolipoyl]-L-lysyl-[lipoyl-carrier protein] + a hydroperoxide = N(6)-[(R)-lipoyl]-L-lysyl-[lipoyl-carrier protein] + an alcohol + H2O. Functionally, antioxidant protein with alkyl hydroperoxidase activity. Required for the reduction of the AhpC active site cysteine residues and for the regeneration of the AhpC enzyme activity. In Mycobacterium ulcerans (strain Agy99), this protein is Alkyl hydroperoxide reductase AhpD.